Reading from the N-terminus, the 76-residue chain is Serine palmitoyltransferase small subunit B (76 aa).

Residues 1-11 (MDFKRVKEYFA) lie on the Cytoplasmic side of the membrane. Residues 12–29 (WLYYQYQIITCCAVMEPW) form a helical membrane-spanning segment. Residues 30–36 (EQSMLNT) lie on the Lumenal side of the membrane. A helical membrane pass occupies residues 37–57 (IILTIVAMVVYTAYVFIPIHI). Topologically, residues 58–76 (RLAWEFFSKICGYDSSISN) are cytoplasmic.

The protein belongs to the SPTSS family. SPTSSB subfamily. As to quaternary structure, component of the serine palmitoyltransferase (SPT) complex, which is composed of SPTLC1, SPTLC2 or SPTLC3 and SPTSSA or SPTSSB. The heterodimer consisting of SPTLC1 and SPTLC2/SPTLC3 forms the catalytic core of the enzyme, while SPTSSA or SPTSSB subunits determine substrate specificity. SPT also interacts with ORMDL proteins, especially ORMDL3, which negatively regulate SPT activity in the presence of ceramides. As to expression, expression is strong in hypogonadal (hpg) mouse prostate, weak in mature castrated mouse prostate and absent in normal intact or androgen-replaced hpg mouse prostates.

It localises to the endoplasmic reticulum membrane. Its pathway is lipid metabolism; sphingolipid metabolism. Functionally, component of the serine palmitoyltransferase multisubunit enzyme (SPT) that catalyzes the initial and rate-limiting step in sphingolipid biosynthesis by condensing L-serine and activated acyl-CoA (most commonly palmitoyl-CoA) to form long-chain bases. The SPT complex is composed of SPTLC1, SPTLC2 or SPTLC3 and SPTSSA or SPTSSB. Within this complex, the heterodimer consisting of SPTLC1 and SPTLC2/SPTLC3 forms the catalytic core. Within the SPT complex, SPTSSB stimulates the catalytic activity and plays a role in substrate specificity. SPT complexes with this subunit showing a preference for longer acyl-CoAs. The SPTLC1-SPTLC2-SPTSSB complex shows a strong preference for C18-CoA substrate, while the SPTLC1-SPTLC3-SPTSSB isozyme displays an ability to use a broader range of acyl-CoAs, without apparent preference. The polypeptide is Serine palmitoyltransferase small subunit B (Sptssb) (Mus musculus (Mouse)).